The following is a 404-amino-acid chain: Cysteine desulfurase IscS (404 aa).

Residues 75-76, Asn-155, Gln-183, and 203-205 contribute to the pyridoxal 5'-phosphate site; these read AT and TGH. Residue Lys-206 is modified to N6-(pyridoxal phosphate)lysine. A pyridoxal 5'-phosphate-binding site is contributed by Thr-243. Cys-328 functions as the Cysteine persulfide intermediate in the catalytic mechanism. Cys-328 is a binding site for [2Fe-2S] cluster.

It belongs to the class-V pyridoxal-phosphate-dependent aminotransferase family. NifS/IscS subfamily. As to quaternary structure, homodimer. Forms a heterotetramer with IscU, interacts with other sulfur acceptors. It depends on pyridoxal 5'-phosphate as a cofactor.

Its subcellular location is the cytoplasm. It catalyses the reaction (sulfur carrier)-H + L-cysteine = (sulfur carrier)-SH + L-alanine. It participates in cofactor biosynthesis; iron-sulfur cluster biosynthesis. Functionally, master enzyme that delivers sulfur to a number of partners involved in Fe-S cluster assembly, tRNA modification or cofactor biosynthesis. Catalyzes the removal of elemental sulfur atoms from cysteine to produce alanine. Functions as a sulfur delivery protein for Fe-S cluster synthesis onto IscU, an Fe-S scaffold assembly protein, as well as other S acceptor proteins. In Enterobacter sp. (strain 638), this protein is Cysteine desulfurase IscS.